The primary structure comprises 493 residues: Glycerol kinase (493 aa).

Threonine 12 provides a ligand contact to ADP. ATP is bound by residues threonine 12, threonine 13, and serine 14. Residue threonine 12 participates in sn-glycerol 3-phosphate binding. An ADP-binding site is contributed by arginine 16. Sn-glycerol 3-phosphate contacts are provided by arginine 82, glutamate 83, tyrosine 132, and aspartate 239. Residues arginine 82, glutamate 83, tyrosine 132, aspartate 239, and glutamine 240 each coordinate glycerol. Positions 261 and 303 each coordinate ADP. Threonine 261, glycine 303, glutamine 307, and glycine 402 together coordinate ATP. Residues glycine 402 and asparagine 406 each coordinate ADP.

The protein belongs to the FGGY kinase family.

The enzyme catalyses glycerol + ATP = sn-glycerol 3-phosphate + ADP + H(+). The protein operates within polyol metabolism; glycerol degradation via glycerol kinase pathway; sn-glycerol 3-phosphate from glycerol: step 1/1. In terms of biological role, key enzyme in the regulation of glycerol uptake and metabolism. Catalyzes the phosphorylation of glycerol to yield sn-glycerol 3-phosphate. The polypeptide is Glycerol kinase (Thermococcus onnurineus (strain NA1)).